The primary structure comprises 571 residues: Kelch-like protein 28 (571 aa).

The BTB domain occupies 35–102 (CDIILRVGDV…AYTGTVFISQ (68 aa)). Kelch repeat units lie at residues 284–331 (VLCA…VLDQ), 332–386 (KVYV…VLAG), 387–433 (ELYA…VLDG), 435–479 (IYAI…VMLG), 480–526 (FIFV…VIDN), and 528–570 (LYVV…GLTA).

In Homo sapiens (Human), this protein is Kelch-like protein 28 (KLHL28).